The primary structure comprises 216 residues: MRTVLLTGFEPFENEPINPSWEAVRALDGERVGDAVIVARQLPCVFGAAIDTIGELVDVLRPALVIAVGQAGGRAEMSVERVAINVDDARIADNAGAQPIDTAIVAGGPAAYFATLPIKAMVRDMRAAGVPASVSQTAGTFVCNHVFYGLMHRLSQQPDGDVRGGFIHIPYLPEQAARHPGQPSLAQETLVKGLRAAVATALSTRADVREQGGQLH.

Active-site residues include Glu-80, Cys-143, and His-168.

The protein belongs to the peptidase C15 family. In terms of assembly, homotetramer.

The protein localises to the cytoplasm. The catalysed reaction is Release of an N-terminal pyroglutamyl group from a polypeptide, the second amino acid generally not being Pro.. Functionally, removes 5-oxoproline from various penultimate amino acid residues except L-proline. This chain is Pyrrolidone-carboxylate peptidase, found in Cupriavidus necator (strain ATCC 17699 / DSM 428 / KCTC 22496 / NCIMB 10442 / H16 / Stanier 337) (Ralstonia eutropha).